The primary structure comprises 568 residues: Sulfate adenylyltransferase (568 aa).

Residues 1–162 (MANSPHGGVL…IEAVNKLNHY (162 aa)) are N-terminal. The segment at 163 to 388 (DYVALRYSPA…LRESSPPRAT (226 aa)) is catalytic. Q190 is a binding site for sulfate. Residues 190–193 (QTRN) and 284–287 (GRDH) each bind ATP. Active-site residues include T191, R192, and N193. R192 provides a ligand contact to sulfate. A288 contacts sulfate. V326 serves as a coordination point for ATP. Residues 389–568 (QGFTIFLTGY…LESEGYFDRL (180 aa)) are allosteric regulation domain; adenylyl-sulfate kinase-like. 3'-phosphoadenylyl sulfate contacts are provided by residues 428–431 (DTVR), R445, 471–472 (IA), and R510.

The protein in the N-terminal section; belongs to the sulfate adenylyltransferase family. This sequence in the C-terminal section; belongs to the APS kinase family. Homohexamer. Dimer of trimers.

Its subcellular location is the cytoplasm. The catalysed reaction is sulfate + ATP + H(+) = adenosine 5'-phosphosulfate + diphosphate. It participates in sulfur metabolism; hydrogen sulfide biosynthesis; sulfite from sulfate: step 1/3. With respect to regulation, allosterically inhibited by 3'-phosphoadenosine 5'-phosphosulfate (PAPS). Functionally, catalyzes the first intracellular reaction of sulfate assimilation, forming adenosine-5'-phosphosulfate (APS) from inorganic sulfate and ATP. Plays an important role in sulfate activation as a component of the biosynthesis pathway of sulfur-containing amino acids. This is Sulfate adenylyltransferase from Aspergillus terreus.